The primary structure comprises 242 residues: MDHKSPLVSWNVFGFDIVFNLASVLMVVITAILVFILAIVCTRNLKKRPTGKQNFIEWVFDFVRGIIESNMAWKKGGNFHFLAVTLILFIFVANMLGLPFAIVTHDHTLWWKSPTADATVTLTLSTTMILLTHYYGIKMRGTKAYAAGYFKPFWPLAIINVFEEFTSTLTLGLRLYGNIFAGELLLGLLASLFFEQPAWGWIISIPGLIVWQAFSIFVGTIQAYIFVMLSMVYMSHKVADGH.

5 consecutive transmembrane segments (helical) span residues 21 to 41 (LASV…AIVC), 83 to 103 (AVTL…FAIV), 118 to 137 (ATVT…YYGI), 175 to 195 (LYGN…LFFE), and 198 to 218 (AWGW…SIFV).

This sequence belongs to the ATPase A chain family. As to quaternary structure, F-type ATPases have 2 components, CF(1) - the catalytic core - and CF(0) - the membrane proton channel. CF(1) has five subunits: alpha(3), beta(3), gamma(1), delta(1), epsilon(1). CF(0) has three main subunits: a(1), b(2) and c(9-12). The alpha and beta chains form an alternating ring which encloses part of the gamma chain. CF(1) is attached to CF(0) by a central stalk formed by the gamma and epsilon chains, while a peripheral stalk is formed by the delta and b chains.

It is found in the cell membrane. Key component of the proton channel; it plays a direct role in the translocation of protons across the membrane. This is ATP synthase subunit a from Staphylococcus epidermidis (strain ATCC 35984 / DSM 28319 / BCRC 17069 / CCUG 31568 / BM 3577 / RP62A).